The following is a 262-amino-acid chain: Hydroxyethylthiazole kinase (262 aa).

Position 50 (Met50) interacts with substrate. 2 residues coordinate ATP: Arg125 and Thr171. Gly198 provides a ligand contact to substrate.

The protein belongs to the Thz kinase family. Requires Mg(2+) as cofactor.

The enzyme catalyses 5-(2-hydroxyethyl)-4-methylthiazole + ATP = 4-methyl-5-(2-phosphooxyethyl)-thiazole + ADP + H(+). It functions in the pathway cofactor biosynthesis; thiamine diphosphate biosynthesis; 4-methyl-5-(2-phosphoethyl)-thiazole from 5-(2-hydroxyethyl)-4-methylthiazole: step 1/1. Catalyzes the phosphorylation of the hydroxyl group of 4-methyl-5-beta-hydroxyethylthiazole (THZ). In Escherichia coli (strain 55989 / EAEC), this protein is Hydroxyethylthiazole kinase.